A 1025-amino-acid chain; its full sequence is Multidrug resistance protein MdtC (1025 aa).

Helical transmembrane passes span 3-23, 333-353, 360-380, 387-407, 431-451, 463-483, 528-548, 853-873, 875-895, 897-917, 953-973, and 984-1004; these read FFAL…AITL, EVEQ…FLFL, IIPA…MYLC, LSLM…IVVL, VGFT…PLLL, FAVT…TLTP, LVGV…ISIP, VILI…LYES, VHPL…LLAL, LFNA…IGIV, PIMM…LSGG, and ITIV…TPVV.

It belongs to the resistance-nodulation-cell division (RND) (TC 2.A.6) family. MdtC subfamily. Part of a tripartite efflux system composed of MdtA, MdtB and MdtC. MdtC forms a heteromultimer with MdtB.

It localises to the cell inner membrane. The MdtABC tripartite complex confers resistance against novobiocin and deoxycholate. This Escherichia coli O139:H28 (strain E24377A / ETEC) protein is Multidrug resistance protein MdtC.